Consider the following 188-residue polypeptide: uncharacterized protein (188 aa).

Residues 1 to 23 (MVRPKLAFYILPLLLAFLGSALG) form the signal peptide. An N-linked (GlcNAc...) asparagine glycan is attached at N74.

This is an uncharacterized protein from Mus musculus (Mouse).